The sequence spans 402 residues: Acetate kinase (402 aa).

N13 is a binding site for Mg(2+). Position 20 (K20) interacts with ATP. Residue R94 participates in substrate binding. D151 (proton donor/acceptor) is an active-site residue. ATP contacts are provided by residues 211–215, 285–287, and 333–337; these read HLGNG, DFR, and GVGEN. E387 serves as a coordination point for Mg(2+).

The protein belongs to the acetokinase family. In terms of assembly, homodimer. It depends on Mg(2+) as a cofactor. The cofactor is Mn(2+).

It localises to the cytoplasm. The enzyme catalyses acetate + ATP = acetyl phosphate + ADP. It functions in the pathway metabolic intermediate biosynthesis; acetyl-CoA biosynthesis; acetyl-CoA from acetate: step 1/2. Catalyzes the formation of acetyl phosphate from acetate and ATP. Can also catalyze the reverse reaction. The sequence is that of Acetate kinase from Nocardia farcinica (strain IFM 10152).